Reading from the N-terminus, the 531-residue chain is Protein SIS2 (531 aa).

Basic and acidic residues predominate over residues methionine 1–proline 20. Disordered regions lie at residues methionine 1–isoleucine 42, serine 88–serine 127, arginine 139–serine 168, serine 180–leucine 261, and tyrosine 461–leucine 531. A compositionally biased stretch (polar residues) spans leucine 155–serine 168. The span at alanine 183 to threonine 198 shows a compositional bias: low complexity. Gly residues predominate over residues serine 204 to alanine 213. Residues asparagine 214 to threonine 249 are compositionally biased toward low complexity. Acidic residues-rich tracts occupy residues proline 462–aspartate 472 and alanine 481–proline 514.

Belongs to the HFCD (homooligomeric flavin containing Cys decarboxylase) superfamily.

Its subcellular location is the nucleus. The protein resides in the cytoplasm. Functionally, may stimulate expression of certain genes that are periodically expressed during late G1. Also modulates the expression of the ENA1 ATPase. The protein is Protein SIS2 (SIS2) of Candida tropicalis (Yeast).